The sequence spans 727 residues: Iron-sulfur clusters transporter atm1, mitochondrial (727 aa).

The interval 46 to 97 (NSPLRKDASKEPALASNSKTTNPIPTQASASVNPPKDARNATTAKKDLLSET) is disordered. Positions 60–77 (ASNSKTTNPIPTQASASV) are enriched in polar residues. Residues 81 to 94 (KDARNATTAKKDLL) show a composition bias toward basic and acidic residues. The helical transmembrane segment at 131–152 (VGTALSLLVGAKILNVEVPFYF) threads the bilayer. The ABC transmembrane type-1 domain occupies 131-421 (VGTALSLLVG…LGSVYRELRQ (291 aa)). The Mitochondrial intermembrane portion of the chain corresponds to 153 to 175 (KSIVDSMNIDFATVGGTAYTVAG). A helical transmembrane segment spans residues 176–199 (SMIIAYGVTRIGATLFQELRNAVF). At 200 to 248 (ASVAQKAIRRVARNVFEHLLRLDLNFHLSRQTGGLTRAIDRGTKGISFL) the chain is on the mitochondrial matrix side. A helical transmembrane segment spans residues 249–272 (LTSMVFHVVPTALEISLVCGILTY). A topological domain (mitochondrial intermembrane) is located at residue glutamine 273. Residues 274–294 (YGFQFAAITAATMVAYTAFTI) form a helical membrane-spanning segment. Topologically, residues 295 to 360 (TTTAWRTKFR…ASIKVTTSLA (66 aa)) are mitochondrial matrix. Residues 300–304 (RTKFR) and 363–366 (NSGQ) each bind glutathione. Residues 361–379 (FLNSGQNMIFSSALAAMMY) form a helical membrane-spanning segment. At 380–394 (LAANGVANGNLTVGD) the chain is on the mitochondrial intermembrane side. The helical transmembrane segment at 395 to 416 (LVMVNQLVFQLSVPLNFLGSVY) threads the bilayer. Glycine 413 is a glutathione binding site. The Mitochondrial matrix portion of the chain corresponds to 417–727 (RELRQSLLDM…DMAPGPKAQQ (311 aa)). An ABC transporter domain is found at 456-692 (IRFENVTFGY…NGIYAELWNA (237 aa)). ATP contacts are provided by residues tyrosine 465 and 489–500 (GPSGCGKSTILR). The span at 702–719 (EFERETERDDVESKERDM) shows a compositional bias: basic and acidic residues. The disordered stretch occupies residues 702–727 (EFERETERDDVESKERDMAPGPKAQQ).

It belongs to the ABC transporter superfamily. ABCB family. Heavy Metal importer (TC 3.A.1.210) subfamily. Homodimer.

It is found in the mitochondrion inner membrane. In terms of biological role, performs an essential function in the generation of cytoplasmic iron-sulfur proteins by mediating the ATP-dependent export of Fe/S cluster precursors synthesized by nfs1 and other mitochondrial proteins. Hydrolyzes ATP. Binds glutathione and may function by transporting a glutathione-conjugated iron-sulfur compound. In Aspergillus fumigatus (strain ATCC MYA-4609 / CBS 101355 / FGSC A1100 / Af293) (Neosartorya fumigata), this protein is Iron-sulfur clusters transporter atm1, mitochondrial.